The chain runs to 458 residues: NADH-quinone oxidoreductase subunit N 1 (458 aa).

14 helical membrane passes run 12–32 (ALIP…AGLL), 37–57 (EVLV…IPSF), 70–90 (FLTI…LLVL), 101–121 (FNES…LVSA), 124–144 (LISF…LVGI), 159–179 (FMLG…IYGA), 199–219 (ILIG…LVPF), 230–250 (APTP…LGAF), 266–286 (SNFL…FALI), 293–313 (MLAY…IVGT), 321–341 (VAYM…VIAF), 361–381 (IAML…GFIV), 393–413 (GFTW…YYYL), and 438–458 (VAIL…LFLI).

It belongs to the complex I subunit 2 family. NDH-1 is composed of 14 different subunits. Subunits NuoA, H, J, K, L, M, N constitute the membrane sector of the complex.

It localises to the cell inner membrane. It catalyses the reaction a quinone + NADH + 5 H(+)(in) = a quinol + NAD(+) + 4 H(+)(out). NDH-1 shuttles electrons from NADH, via FMN and iron-sulfur (Fe-S) centers, to quinones in the respiratory chain. The immediate electron acceptor for the enzyme in this species is believed to be ubiquinone. Couples the redox reaction to proton translocation (for every two electrons transferred, four hydrogen ions are translocated across the cytoplasmic membrane), and thus conserves the redox energy in a proton gradient. In Thermodesulfovibrio yellowstonii (strain ATCC 51303 / DSM 11347 / YP87), this protein is NADH-quinone oxidoreductase subunit N 1.